Consider the following 33-residue polypeptide: Brevinin-2LT (33 aa).

Cysteine 27 and cysteine 33 are oxidised to a cystine.

Expressed by the skin glands.

The protein resides in the secreted. Its function is as follows. Has antibacterial activity. In Rana latastei (Italian agile frog), this protein is Brevinin-2LT.